The sequence spans 87 residues: RNA-binding protein Hfq (87 aa).

Positions 9–68 constitute a Sm domain; the sequence is DPFLNALRRERIPVSIYLVNGIKLQGQIESFDQFVILLKNTVSQMVYKHAISTVVPARAV.

It belongs to the Hfq family. Homohexamer.

Functionally, RNA chaperone that binds small regulatory RNA (sRNAs) and mRNAs to facilitate mRNA translational regulation in response to envelope stress, environmental stress and changes in metabolite concentrations. Also binds with high specificity to tRNAs. This Aeromonas hydrophila subsp. hydrophila (strain ATCC 7966 / DSM 30187 / BCRC 13018 / CCUG 14551 / JCM 1027 / KCTC 2358 / NCIMB 9240 / NCTC 8049) protein is RNA-binding protein Hfq.